The following is an 870-amino-acid chain: Protein translocase subunit SecA (870 aa).

Residues Q86, 104–108, and D499 each bind ATP; that span reads GEGKT. Positions 854, 856, 865, and 866 each coordinate Zn(2+).

Belongs to the SecA family. Monomer and homodimer. Part of the essential Sec protein translocation apparatus which comprises SecA, SecYEG and auxiliary proteins SecDF-YajC and YidC. Zn(2+) is required as a cofactor.

It localises to the cell inner membrane. The protein resides in the cytoplasm. It catalyses the reaction ATP + H2O + cellular proteinSide 1 = ADP + phosphate + cellular proteinSide 2.. Part of the Sec protein translocase complex. Interacts with the SecYEG preprotein conducting channel. Has a central role in coupling the hydrolysis of ATP to the transfer of proteins into and across the cell membrane, serving both as a receptor for the preprotein-SecB complex and as an ATP-driven molecular motor driving the stepwise translocation of polypeptide chains across the membrane. This chain is Protein translocase subunit SecA, found in Ehrlichia ruminantium (strain Welgevonden).